Consider the following 729-residue polypeptide: Denticleless protein homolog (729 aa).

The residue at position 1 (Met1) is an N-acetylmethionine. WD repeat units follow at residues 47-89 (GVPV…SKKT), 96-135 (AHWN…LMGT), and 138-178 (GHQC…KDGF). Positions 168 to 171 (WDTR) match the DDB1-binding motif motif. Residues 189–198 (HNTADKQTPS) are compositionally biased toward polar residues. The tract at residues 189 to 212 (HNTADKQTPSKPKKKQNSKGLAPA) is disordered. Residue Thr196 is modified to Phosphothreonine. Residues 197–203 (PSKPKKK) carry the Nuclear localization signal motif. WD repeat units follow at residues 214-253 (DSQQ…TAYR), 269-308 (TRKL…TSPV), 313-354 (GHQN…HPPT), and 358-398 (GHSQ…EEKP). Residues 243-246 (WDLR) carry the DDB1-binding motif motif. A phosphoserine mark is found at Ser409 and Ser425. 2 disordered regions span residues 416-445 (KACP…SSPS) and 460-491 (PSST…VSPK). Over residues 427–445 (STPAKAPRAKSSPSISSPS) the composition is skewed to low complexity. Positions 460–475 (PSSTPTFSVKTTPATT) are enriched in polar residues. At Thr463 the chain carries Phosphothreonine; by CDK1 and CDK2. A compositionally biased stretch (low complexity) spans 476–491 (RSSVSRRGSISSVSPK). Ser484, Ser489, Ser494, and Ser511 each carry phosphoserine. Positions 504–546 (VTRTPSSSPPVTPPASETKISSPRKALIPVSQKSSQADACSES) are disordered. A Phosphothreonine modification is found at Thr515. Phosphoserine is present on Ser556. The span at 596-607 (VLSQDSEGPTKS) shows a compositional bias: polar residues. Residues 596–705 (VLSQDSEGPT…GPVTITPSSM (110 aa)) form a disordered region. Low complexity-rich tracts occupy residues 630–645 (EGCG…CGEG) and 674–688 (SSPR…SSRR). Phosphoserine occurs at positions 675 and 678. 2 positions are modified to phosphothreonine: Thr683 and Thr701.

The protein belongs to the WD repeat cdt2 family. As to quaternary structure, component of the DCX(DTL) E3 ubiquitin ligase complex (also called CRL4(CDT2)), at least composed of CUL4 (CUL4A or CUL4B), DDB1, DTL/CDT2 and RBX1. Interacts with CDKN1A and DDB1. Interacts with FBXO11; SCF(FBXWO11) controls DTL stability but DCX(DTL) does not control FBXO11 stability. Interacts with CRY1. In terms of processing, ubiquitinated by the anaphase promoting complex/cyclosome (APC/C). Autoubiquitinated through 'Lys-48'-polyubiquitin chains in a PCNA-independent reaction, allowing proteasomal turnover. Polyubiquitinated by SCF(FBXO11) when not phosphorylated, leading to its degradation. A tight regulation of the polyubiquitination by SCF(FBXO11) is involved in the control of different processes such as TGF-beta signaling, cell cycle progression and exit. Phosphorylated at Thr-463 by CDK1/Cyclin B and CDK2/Cycnlin A but not by CDK2/Cyclin E, MAPK1 or PLK1. Phosphorylation at Thr-463 inhibits the interaction with FBXO11 and decreases upon cell cycle exit induced by TGF-beta or serum starvation.

Its subcellular location is the nucleus. It localises to the nucleus membrane. The protein localises to the cytoplasm. It is found in the cytoskeleton. The protein resides in the microtubule organizing center. Its subcellular location is the centrosome. It localises to the chromosome. It participates in protein modification; protein ubiquitination. Substrate-specific adapter of a DCX (DDB1-CUL4-X-box) E3 ubiquitin-protein ligase complex required for cell cycle control, DNA damage response and translesion DNA synthesis. The DCX(DTL) complex, also named CRL4(CDT2) complex, mediates the polyubiquitination and subsequent degradation of CDT1, CDKN1A/p21(CIP1), FBH1, KMT5A and SDE2. CDT1 degradation in response to DNA damage is necessary to ensure proper cell cycle regulation of DNA replication. CDKN1A/p21(CIP1) degradation during S phase or following UV irradiation is essential to control replication licensing. KMT5A degradation is also important for a proper regulation of mechanisms such as TGF-beta signaling, cell cycle progression, DNA repair and cell migration. Most substrates require their interaction with PCNA for their polyubiquitination: substrates interact with PCNA via their PIP-box, and those containing the 'K+4' motif in the PIP box, recruit the DCX(DTL) complex, leading to their degradation. In undamaged proliferating cells, the DCX(DTL) complex also promotes the 'Lys-164' monoubiquitination of PCNA, thereby being involved in PCNA-dependent translesion DNA synthesis. The DDB1-CUL4A-DTL E3 ligase complex regulates the circadian clock function by mediating the ubiquitination and degradation of CRY1. This Mus musculus (Mouse) protein is Denticleless protein homolog (Dtl).